The primary structure comprises 346 residues: Tetraacyldisaccharide 4'-kinase (346 aa).

Position 53-60 (53-60) interacts with ATP; it reads TCGGTGKT.

It belongs to the LpxK family.

The enzyme catalyses a lipid A disaccharide + ATP = a lipid IVA + ADP + H(+). The protein operates within glycolipid biosynthesis; lipid IV(A) biosynthesis; lipid IV(A) from (3R)-3-hydroxytetradecanoyl-[acyl-carrier-protein] and UDP-N-acetyl-alpha-D-glucosamine: step 6/6. Functionally, transfers the gamma-phosphate of ATP to the 4'-position of a tetraacyldisaccharide 1-phosphate intermediate (termed DS-1-P) to form tetraacyldisaccharide 1,4'-bis-phosphate (lipid IVA). This Bartonella tribocorum (strain CIP 105476 / IBS 506) protein is Tetraacyldisaccharide 4'-kinase.